The sequence spans 246 residues: Uroporphyrinogen-III synthase (246 aa).

This sequence belongs to the uroporphyrinogen-III synthase family. As to quaternary structure, monomer.

It catalyses the reaction hydroxymethylbilane = uroporphyrinogen III + H2O. The protein operates within porphyrin-containing compound metabolism; protoporphyrin-IX biosynthesis; coproporphyrinogen-III from 5-aminolevulinate: step 3/4. Its function is as follows. Catalyzes cyclization of the linear tetrapyrrole, hydroxymethylbilane, to the macrocyclic uroporphyrinogen III. This chain is Uroporphyrinogen-III synthase (hemD), found in Escherichia coli (strain K12).